The sequence spans 524 residues: GMP synthase [glutamine-hydrolyzing] (524 aa).

In terms of domain architecture, Glutamine amidotransferase type-1 spans 5–195 (KVIVIDFGGQ…VRGVCGCAGT (191 aa)). The Nucleophile role is filled by Cys-82. Residues His-169 and Glu-171 contribute to the active site. Positions 196–389 (WKMDAFVENT…LGIPEHLVFR (194 aa)) constitute a GMPS ATP-PPase domain. 223 to 229 (SGGVDSS) provides a ligand contact to ATP.

Homodimer.

The catalysed reaction is XMP + L-glutamine + ATP + H2O = GMP + L-glutamate + AMP + diphosphate + 2 H(+). It functions in the pathway purine metabolism; GMP biosynthesis; GMP from XMP (L-Gln route): step 1/1. In terms of biological role, catalyzes the synthesis of GMP from XMP. The polypeptide is GMP synthase [glutamine-hydrolyzing] (Lachnospira eligens (strain ATCC 27750 / DSM 3376 / VPI C15-48 / C15-B4) (Eubacterium eligens)).